We begin with the raw amino-acid sequence, 196 residues long: Protein GrpE (196 aa).

Positions 1 to 40 are disordered; it reads MSSKEQKTPEGQAPEEIIMDQHEEVEAVEPNDSAEQVDPR.

This sequence belongs to the GrpE family. Homodimer.

The protein localises to the cytoplasm. Functionally, participates actively in the response to hyperosmotic and heat shock by preventing the aggregation of stress-denatured proteins, in association with DnaK and GrpE. It is the nucleotide exchange factor for DnaK and may function as a thermosensor. Unfolded proteins bind initially to DnaJ; upon interaction with the DnaJ-bound protein, DnaK hydrolyzes its bound ATP, resulting in the formation of a stable complex. GrpE releases ADP from DnaK; ATP binding to DnaK triggers the release of the substrate protein, thus completing the reaction cycle. Several rounds of ATP-dependent interactions between DnaJ, DnaK and GrpE are required for fully efficient folding. The protein is Protein GrpE of Salmonella gallinarum (strain 287/91 / NCTC 13346).